Reading from the N-terminus, the 154-residue chain is 6,7-dimethyl-8-ribityllumazine synthase (154 aa).

Residues Phe22, 57 to 59 (AYE), and 81 to 83 (AVI) contribute to the 5-amino-6-(D-ribitylamino)uracil site. Residue 86 to 87 (GT) participates in (2S)-2-hydroxy-3-oxobutyl phosphate binding. Catalysis depends on His89, which acts as the Proton donor. Phe114 is a binding site for 5-amino-6-(D-ribitylamino)uracil. Arg128 lines the (2S)-2-hydroxy-3-oxobutyl phosphate pocket.

It belongs to the DMRL synthase family. In terms of assembly, forms an icosahedral capsid composed of 60 subunits, arranged as a dodecamer of pentamers.

The catalysed reaction is (2S)-2-hydroxy-3-oxobutyl phosphate + 5-amino-6-(D-ribitylamino)uracil = 6,7-dimethyl-8-(1-D-ribityl)lumazine + phosphate + 2 H2O + H(+). Its pathway is cofactor biosynthesis; riboflavin biosynthesis; riboflavin from 2-hydroxy-3-oxobutyl phosphate and 5-amino-6-(D-ribitylamino)uracil: step 1/2. In terms of biological role, catalyzes the formation of 6,7-dimethyl-8-ribityllumazine by condensation of 5-amino-6-(D-ribitylamino)uracil with 3,4-dihydroxy-2-butanone 4-phosphate. This is the penultimate step in the biosynthesis of riboflavin. The polypeptide is 6,7-dimethyl-8-ribityllumazine synthase (Colwellia psychrerythraea (strain 34H / ATCC BAA-681) (Vibrio psychroerythus)).